Consider the following 218-residue polypeptide: Glutathione S-transferase Mu 2 (218 aa).

Residues 2–88 (PMTLGYWNIR…YIARKHNLCG (87 aa)) enclose the GST N-terminal domain. A glutathione-binding site is contributed by 7-8 (YW). Residues S27 and S44 each carry the phosphoserine modification. Residues 43 to 46 (RSQW), K50, 59 to 60 (NL), and 72 to 73 (QS) each bind glutathione. The GST C-terminal domain maps to 90–208 (TEKEKIREDI…KSSRFLPRPV (119 aa)). Substrate is bound at residue Y116.

This sequence belongs to the GST superfamily. Mu family. As to quaternary structure, homodimer.

It is found in the cytoplasm. The enzyme catalyses RX + glutathione = an S-substituted glutathione + a halide anion + H(+). The catalysed reaction is 11(S)-hydroxy-14(S),15(S)-epoxy-(5Z,8Z,12E)-eicosatrienoate + glutathione = (11S,15S)-dihydroxy-14(R)-S-glutathionyl-(5Z,8Z,12E)-eicosatrienoate. In terms of biological role, conjugation of reduced glutathione to a wide number of exogenous and endogenous hydrophobic electrophiles. Participates in the formation of novel hepoxilin regioisomers. Has activity toward aflatoxin B(1)-8,9-epoxide (AFBO). This Macaca fascicularis (Crab-eating macaque) protein is Glutathione S-transferase Mu 2 (GSTM2).